Reading from the N-terminus, the 491-residue chain is Lysine--tRNA ligase (491 aa).

Mg(2+)-binding residues include glutamate 400 and glutamate 407.

Belongs to the class-II aminoacyl-tRNA synthetase family. Homodimer. Requires Mg(2+) as cofactor.

The protein resides in the cytoplasm. It carries out the reaction tRNA(Lys) + L-lysine + ATP = L-lysyl-tRNA(Lys) + AMP + diphosphate. This is Lysine--tRNA ligase from Mesomycoplasma hyopneumoniae (strain J / ATCC 25934 / NCTC 10110) (Mycoplasma hyopneumoniae).